The following is a 108-amino-acid chain: Thiosulfate sulfurtransferase GlpE (108 aa).

The Rhodanese domain occupies 17 to 105; it reads QEKEAVLVDI…WQRQFPAEVA (89 aa). Residue cysteine 65 is the Cysteine persulfide intermediate of the active site.

The protein belongs to the GlpE family.

Its subcellular location is the cytoplasm. It carries out the reaction thiosulfate + hydrogen cyanide = thiocyanate + sulfite + 2 H(+). It catalyses the reaction thiosulfate + [thioredoxin]-dithiol = [thioredoxin]-disulfide + hydrogen sulfide + sulfite + 2 H(+). Transferase that catalyzes the transfer of sulfur from thiosulfate to thiophilic acceptors such as cyanide or dithiols. May function in a CysM-independent thiosulfate assimilation pathway by catalyzing the conversion of thiosulfate to sulfite, which can then be used for L-cysteine biosynthesis. The chain is Thiosulfate sulfurtransferase GlpE from Escherichia coli O139:H28 (strain E24377A / ETEC).